The sequence spans 340 residues: Eukaryotic translation initiation factor 3 subunit I (340 aa).

WD repeat units lie at residues 8 to 47, 50 to 91, 150 to 189, 194 to 233, and 291 to 330; these read GHERSLNQIKFNRDGDLLFSVAKDKIVCAWWSANGERLGT, GHQG…KVWD, CTESKATVAGWSYLGKYIIAGHEDGSVSQYDGKTGEQLEN, EFDHQINDIQFSQDRTYFITASKDKSAKLISSRNLAILKT, and GHFGPLNTVDVHPNGTAYASGGEDGYVRVHHFDKPYFDFM.

It belongs to the eIF-3 subunit I family. Component of the eukaryotic translation initiation factor 3 (eIF-3) complex.

The protein localises to the cytoplasm. Its function is as follows. Component of the eukaryotic translation initiation factor 3 (eIF-3) complex, which is involved in protein synthesis of a specialized repertoire of mRNAs and, together with other initiation factors, stimulates binding of mRNA and methionyl-tRNAi to the 40S ribosome. The eIF-3 complex specifically targets and initiates translation of a subset of mRNAs involved in cell proliferation. The chain is Eukaryotic translation initiation factor 3 subunit I (tif34) from Aspergillus fumigatus (strain CBS 144.89 / FGSC A1163 / CEA10) (Neosartorya fumigata).